Consider the following 307-residue polypeptide: 1-aminocyclopropane-1-carboxylate oxidase 5 (307 aa).

The stretch at 106–134 forms a coiled coil; it reads SNIKETMGEYREEVRKLASKMMEVMDENL. Residues 152 to 256 enclose the Fe2OG dioxygenase domain; sequence GEETAFFGTK…RRSIASFYNP (105 aa). Fe cation is bound by residues H180, D182, and H237. R247 provides a ligand contact to 2-oxoglutarate.

This sequence belongs to the iron/ascorbate-dependent oxidoreductase family. It depends on Fe(2+) as a cofactor.

It carries out the reaction 1-aminocyclopropane-1-carboxylate + L-ascorbate + O2 = ethene + L-dehydroascorbate + hydrogen cyanide + CO2 + 2 H2O. Its pathway is alkene biosynthesis; ethylene biosynthesis via S-adenosyl-L-methionine; ethylene from S-adenosyl-L-methionine: step 2/2. In terms of biological role, enzyme involved in the ethylene biosynthesis. The protein is 1-aminocyclopropane-1-carboxylate oxidase 5 of Arabidopsis thaliana (Mouse-ear cress).